The chain runs to 264 residues: Small ribosomal subunit protein eS1 (264 aa).

K34 is modified (N6-acetyllysine; alternate). K34 is covalently cross-linked (Glycyl lysine isopeptide (Lys-Gly) (interchain with G-Cter in SUMO2); alternate). K56 is modified (N6-acetyllysine). Position 155 is an ADP-ribosyltyrosine (Y155). Residues 233-264 (GEGGSSGKAAGDETGAKVERADGYEPPVQESV) are disordered. S237 bears the Phosphoserine mark. Residues 242–255 (AGDETGAKVERADG) show a composition bias toward basic and acidic residues. K249 carries the N6-acetyllysine; alternate modification. Residue K249 forms a Glycyl lysine isopeptide (Lys-Gly) (interchain with G-Cter in SUMO2); alternate linkage. Phosphotyrosine is present on Y256. Phosphoserine is present on S263.

Belongs to the eukaryotic ribosomal protein eS1 family. As to quaternary structure, component of the small ribosomal subunit. Mature ribosomes consist of a small (40S) and a large (60S) subunit. The 40S subunit contains about 33 different proteins and 1 molecule of RNA (18S). The 60S subunit contains about 49 different proteins and 3 molecules of RNA (28S, 5.8S and 5S). Identified in a IGF2BP1-dependent mRNP granule complex containing untranslated mRNAs. Binds with high affinity to IPO4. Interacts with DDIT3. Part of the small subunit (SSU) processome, composed of more than 70 proteins and the RNA chaperone small nucleolar RNA (snoRNA) U3. In terms of processing, ADP-ribosylated at Tyr-155 by PARP1 in presence of HPF1.

Its subcellular location is the cytoplasm. It is found in the nucleus. The protein resides in the nucleolus. Component of the small ribosomal subunit. The ribosome is a large ribonucleoprotein complex responsible for the synthesis of proteins in the cell. Part of the small subunit (SSU) processome, first precursor of the small eukaryotic ribosomal subunit. During the assembly of the SSU processome in the nucleolus, many ribosome biogenesis factors, an RNA chaperone and ribosomal proteins associate with the nascent pre-rRNA and work in concert to generate RNA folding, modifications, rearrangements and cleavage as well as targeted degradation of pre-ribosomal RNA by the RNA exosome. May play a role during erythropoiesis through regulation of transcription factor DDIT3. The sequence is that of Small ribosomal subunit protein eS1 (Rps3a) from Mus musculus (Mouse).